We begin with the raw amino-acid sequence, 972 residues long: Structural polyprotein (972 aa).

D26 is a binding site for a divalent metal cation. A Peptidase S50 domain is found at 509-734; it reads SGGPDGKFSR…YLGELMASNA (226 aa). Residue S633 is the Nucleophile of the active site. Residue K674 is part of the active site. Disordered stretches follow at residues 794-817 and 916-972; these read KLISTPPKHPEKPKGPDQHHAQEA and NGGR…NAEV. Positions 801–817 are enriched in basic and acidic residues; that stretch reads KHPEKPKGPDQHHAQEA. Polar residues predominate over residues 963-972; that stretch reads FTPSGDNAEV.

In terms of assembly, homotrimer. A central divalent metal (possibly cobalt) stabilizes the VP2 trimer. Homodimer. interacts (via C-terminus) with VP1 in the cytoplasm. Interacts with VP2. Specific enzymatic cleavages yield mature proteins. The capsid assembly seems to be regulated by polyprotein processing. The protease VP4 cleaves itself off the polyprotein, thus releasing pre-VP2 and VP3 within the infected cell. During capsid assembly, the C-terminus of pre-VP2 is further processed by VP4, giving rise to VP2, the external capsid protein and three small peptides that all stay closely associated with the capsid.

It localises to the virion. Its subcellular location is the host cytoplasm. In terms of biological role, capsid protein VP2 self assembles to form an icosahedral capsid with a T=13 symmetry, about 70 nm in diameter, and consisting of 260 VP2 trimers. The capsid encapsulates the genomic dsRNA. VP2 is also involved in attachment and entry into the host cell. The precursor of VP2 plays an important role in capsid assembly. First, pre-VP2 and VP2 oligomers assemble to form a procapsid. Then, the pre-VP2 intermediates may be processed into VP2 proteins by proteolytic cleavage mediated by VP4 to obtain the mature virion. The final capsid is composed of pentamers and hexamers but VP2 has a natural tendency to assemble into all-pentameric structures. Therefore pre-VP2 may be required to allow formation of the hexameric structures. Functionally, protease VP4 is a serine protease that cleaves the polyprotein into its final products. Pre-VP2 is first partially cleaved, and may be completely processed by VP4 upon capsid maturation. Its function is as follows. Capsid protein VP3 plays a key role in virion assembly by providing a scaffold for the capsid made of VP2. May self-assemble to form a T=4-like icosahedral inner-capsid composed of at least 180 trimers. Plays a role in genomic RNA packaging by recruiting VP1 into the capsid and interacting with the dsRNA genome segments to form a ribonucleoprotein complex. Additionally, the interaction of the VP3 C-terminal tail with VP1 removes the inherent structural blockade of the polymerase active site. Thus, VP3 can also function as a transcriptional activator. In terms of biological role, structural peptide 1 is a small peptide derived from pre-VP2 C-terminus. It destabilizes and perforates cell membranes, suggesting a role during entry. Structural peptide 2 is a small peptide derived from pVP2 C-terminus. It is not essential for the virus viability, but viral growth is affected when missing. Functionally, structural peptide 3 is a small peptide derived from pVP2 C-terminus. It is not essential for the virus viability, but viral growth is affected when missing. This chain is Structural polyprotein, found in Infectious pancreatic necrosis virus (strain Sp) (IPNV).